Consider the following 1111-residue polypeptide: uncharacterized protein (1111 aa).

The signal sequence occupies residues 1–31; sequence MIRKLMKIPPFFTALFASAMFTLSVSQGVLA. Transmembrane regions (helical) follow at residues 490 to 510, 538 to 558, 572 to 592, 620 to 640, 644 to 664, 694 to 714, 797 to 817, 840 to 860, 885 to 905, 922 to 942, and 1003 to 1023; these read LPYLLMYFLGLFIVGGAIFKF, LALLLTAFLTLSSTLWFLAVC, FWHWSFSMAGYWWFFTFWISL, IIVVVVLLLNTSVFSNVTDAG, DVLGQINTIAALIFCAAIIAP, IPVGLIVLIVLGYYYTALNLI, FIWTALLGIFYYVWSDLVTVV, SITLFNLLVALVIVGITYVLV, ITTLLTYIFIAIGGAWAFATL, GLGFGMQEIFANFVSGIILLF, and LVISVGVAYGSDLTLVRQLLL.

It belongs to the MscS (TC 1.A.23) family.

The protein resides in the cell membrane. This is an uncharacterized protein from Haemophilus influenzae (strain ATCC 51907 / DSM 11121 / KW20 / Rd).